The primary structure comprises 877 residues: DNA polymerase I (877 aa).

Positions 177-270 (TPAQFIDLKA…LEDLVYSGPD (94 aa)) constitute a 5'-3' exonuclease domain. The 3'-5' exonuclease domain maps to 302 to 465 (DFTIVDQISQ…TEPILLEKLS (164 aa)).

It belongs to the DNA polymerase type-A family. In terms of assembly, single-chain monomer with multiple functions.

It carries out the reaction DNA(n) + a 2'-deoxyribonucleoside 5'-triphosphate = DNA(n+1) + diphosphate. Its function is as follows. In addition to polymerase activity, this DNA polymerase exhibits 3'-5' and 5'-3' exonuclease activity. The protein is DNA polymerase I (polA) of Streptococcus pneumoniae (strain ATCC BAA-255 / R6).